A 137-amino-acid chain; its full sequence is Small ribosomal subunit protein eS17 (137 aa).

The protein belongs to the eukaryotic ribosomal protein eS17 family. As to quaternary structure, component of the small ribosomal subunit. Mature ribosomes consist of a small (40S) and a large (60S) subunit. The 40S subunit contains about 32 different proteins and 1 molecule of RNA (18S). The 60S subunit contains 45 different proteins and 3 molecules of RNA (25S, 5.8S and 5S).

It localises to the cytoplasm. Its function is as follows. Component of the ribosome, a large ribonucleoprotein complex responsible for the synthesis of proteins in the cell. The small ribosomal subunit (SSU) binds messenger RNAs (mRNAs) and translates the encoded message by selecting cognate aminoacyl-transfer RNA (tRNA) molecules. The large subunit (LSU) contains the ribosomal catalytic site termed the peptidyl transferase center (PTC), which catalyzes the formation of peptide bonds, thereby polymerizing the amino acids delivered by tRNAs into a polypeptide chain. The nascent polypeptides leave the ribosome through a tunnel in the LSU and interact with protein factors that function in enzymatic processing, targeting, and the membrane insertion of nascent chains at the exit of the ribosomal tunnel. This is Small ribosomal subunit protein eS17 (RPS17B) from Candida albicans (strain SC5314 / ATCC MYA-2876) (Yeast).